The chain runs to 613 residues: Transcription factor Sp2 (613 aa).

The disordered stretch occupies residues 1 to 32 (MSDPQTSMAATAAVSPSDYLQPAASTTQDSQP). A compositionally biased stretch (polar residues) spans 23-32 (AASTTQDSQP). S78 is modified (phosphoserine). The span at 225 to 235 (TGAPTQLLTES) shows a compositional bias: polar residues. Positions 225–258 (TGAPTQLLTESPPTPLSKTNKKARKKSLPASQPP) are disordered. Residues 361-369 (GEVQTVLVQ) carry the 9aaTAD; inactive motif. Positions 372–389 (PPATAAATSNTTCSSPAS) are enriched in low complexity. The disordered stretch occupies residues 372–404 (PPATAAATSNTTCSSPASRAPHLSGTSKKHSAA). 3 consecutive C2H2-type zinc fingers follow at residues 525–549 (HVCHIPDCGKTFRKTSLLRAHVRLH), 555–579 (FVCNWFFCGKRFTRSDELQRHARTH), and 585–607 (FECAQCQKRFMRSDHLTKHYKTH).

It belongs to the Sp1 C2H2-type zinc-finger protein family.

Its subcellular location is the nucleus. In terms of biological role, binds to GC box promoters elements and selectively activates mRNA synthesis from genes that contain functional recognition sites. This is Transcription factor Sp2 (SP2) from Homo sapiens (Human).